A 402-amino-acid chain; its full sequence is Fugralins biosynthesis cluster protein 2 (402 aa).

The next 5 membrane-spanning stretches (helical) occupy residues 28–48, 109–129, 145–165, 232–252, and 264–284; these read NCLAYTVLILCAVITTICFLL, ILIFGVCYSFVLPFLKIAILV, IFWWGCMVIGFVQATSNTAIV, VIFGLGLLACVSAAVRLAVTV, and LAPLVFWATAEMTCGFFIVCV. Disordered stretches follow at residues 312-335 and 378-402; these read NPNTADRYAKSGTKGSQLSSTGPK and TQDNRSTSDSEGHAAFPASQKPWGV. The segment covering 324 to 334 has biased composition (polar residues); the sequence is TKGSQLSSTGP. Asparagine 381 carries an N-linked (GlcNAc...) asparagine glycan.

This sequence belongs to the SAT4 family.

The protein localises to the membrane. It functions in the pathway secondary metabolite biosynthesis. In terms of biological role, part of the gene cluster that mediates the biosynthesis of the tetraketides fugralins such as linear fugralin A and cyclic fugralin B, volatile compounds that play a role in the asexual reproductive cycle but are not involved in pathogenicity. One of the key features of fugralins is the presence of a double methyl group, which is only rarely encountered in fungal secondary metabolites. As the fugralins cluster does not contain an independent methyltransferase, the PKS FGR1 is probably responsible for adding two methyl groups to the same carbon atom. Fugralin B is similar to fugralin A except for a cyclization between the carboxylic acid C-8 and the alcohol on C-4 resulting in a six membered lactone ring, probably catalyzed by the cyclase FGR4. The exact role of the individual cluster genes remains unknown and further work is needed to unravel the biosynthetic pathway. This is Fugralins biosynthesis cluster protein 2 from Gibberella zeae (strain ATCC MYA-4620 / CBS 123657 / FGSC 9075 / NRRL 31084 / PH-1) (Wheat head blight fungus).